The sequence spans 388 residues: Cobalt-precorrin-5B C(1)-methyltransferase (388 aa).

Belongs to the CbiD family.

The catalysed reaction is Co-precorrin-5B + S-adenosyl-L-methionine = Co-precorrin-6A + S-adenosyl-L-homocysteine. The protein operates within cofactor biosynthesis; adenosylcobalamin biosynthesis; cob(II)yrinate a,c-diamide from sirohydrochlorin (anaerobic route): step 6/10. Its function is as follows. Catalyzes the methylation of C-1 in cobalt-precorrin-5B to form cobalt-precorrin-6A. This chain is Cobalt-precorrin-5B C(1)-methyltransferase, found in Rubrobacter xylanophilus (strain DSM 9941 / JCM 11954 / NBRC 16129 / PRD-1).